An 847-amino-acid chain; its full sequence is Guanine nucleotide exchange factor VAV3 (847 aa).

The Calponin-homology (CH) domain occupies Met-1–Pro-119. A Phosphotyrosine modification is found at Tyr-141. Positions Ile-192 to Val-371 constitute a DH domain. Residues Arg-400–Ser-502 form the PH domain. The Phorbol-ester/DAG-type zinc-finger motif lies at Phe-513–Cys-562. A sufficient for interaction with ROS1 region spans residues Asp-560–Glu-847. The 69-residue stretch at Pro-592–Cys-660 folds into the SH3 1 domain. The SH2 domain occupies Trp-672–Tyr-766. The 60-residue stretch at Lys-788–Glu-847 folds into the SH3 2 domain.

In terms of assembly, interacts with the PH domain of APS. Interacts with ROS1; constitutive interaction that mediates VAV3 phosphorylation. Interacts (via SH2 domains) with the phosphorylated form of EPHA2. Post-translationally, phosphorylated. Phosphorylation can be mediated by ROS1. In osteoclasts, undergoes tyrosine phosphorylation in response to CSF1. In terms of tissue distribution, abundantly expressed in osteoclasts and mature osteoblasts. Also expressed in bone marrow macrophages (at protein level):.

Exchange factor for GTP-binding proteins RhoA, RhoG and, to a lesser extent, Rac1. Binds physically to the nucleotide-free states of those GTPases. Plays an important role in angiogenesis. Its recruitment by phosphorylated EPHA2 is critical for EFNA1-induced RAC1 GTPase activation and vascular endothelial cell migration and assembly. May be important for integrin-mediated signaling, at least in some cell types. In osteoclasts, along with SYK tyrosine kinase, required for signaling through integrin alpha-v/beta-1 (ITAGV-ITGB1), a crucial event for osteoclast proper cytoskeleton organization and function. This signaling pathway involves RAC1, but not RHO, activation. Necessary for proper wound healing. In the course of wound healing, required for the phagocytotic cup formation preceding macrophage phagocytosis of apoptotic neutrophils. Responsible for integrin beta-2-mediated macrophage adhesion and, to a lesser extent, contributes to beta-3-mediated adhesion. Does not affect integrin beta-1-mediated adhesion. This is Guanine nucleotide exchange factor VAV3 (Vav3) from Mus musculus (Mouse).